A 308-amino-acid chain; its full sequence is ADP-L-glycero-D-manno-heptose-6-epimerase (308 aa).

Residues 10–11 (FI), 31–32 (DN), K38, K53, 75–79 (EGACS), and N92 each bind NADP(+). Catalysis depends on Y139, which acts as the Proton acceptor. K143 contributes to the NADP(+) binding site. N168 provides a ligand contact to substrate. Residues V169 and K177 each coordinate NADP(+). The Proton acceptor role is filled by K177. Substrate is bound by residues S179, H186, 200 to 203 (FAGS), R208, and Y271.

It belongs to the NAD(P)-dependent epimerase/dehydratase family. HldD subfamily. In terms of assembly, homopentamer. Requires NADP(+) as cofactor.

It carries out the reaction ADP-D-glycero-beta-D-manno-heptose = ADP-L-glycero-beta-D-manno-heptose. It participates in nucleotide-sugar biosynthesis; ADP-L-glycero-beta-D-manno-heptose biosynthesis; ADP-L-glycero-beta-D-manno-heptose from D-glycero-beta-D-manno-heptose 7-phosphate: step 4/4. Its function is as follows. Catalyzes the interconversion between ADP-D-glycero-beta-D-manno-heptose and ADP-L-glycero-beta-D-manno-heptose via an epimerization at carbon 6 of the heptose. This Actinobacillus succinogenes (strain ATCC 55618 / DSM 22257 / CCUG 43843 / 130Z) protein is ADP-L-glycero-D-manno-heptose-6-epimerase.